The chain runs to 231 residues: Probable methylthioribulose-1-phosphate dehydratase (231 aa).

Cys90 contributes to the substrate binding site. Positions 108 and 110 each coordinate Zn(2+). Glu132 functions as the Proton donor/acceptor in the catalytic mechanism. His188 provides a ligand contact to Zn(2+).

Belongs to the aldolase class II family. MtnB subfamily. Requires Zn(2+) as cofactor.

The protein localises to the cytoplasm. It catalyses the reaction 5-(methylsulfanyl)-D-ribulose 1-phosphate = 5-methylsulfanyl-2,3-dioxopentyl phosphate + H2O. Its pathway is amino-acid biosynthesis; L-methionine biosynthesis via salvage pathway; L-methionine from S-methyl-5-thio-alpha-D-ribose 1-phosphate: step 2/6. Functionally, catalyzes the dehydration of methylthioribulose-1-phosphate (MTRu-1-P) into 2,3-diketo-5-methylthiopentyl-1-phosphate (DK-MTP-1-P). This chain is Probable methylthioribulose-1-phosphate dehydratase, found in Anopheles gambiae (African malaria mosquito).